Reading from the N-terminus, the 544-residue chain is Prolyl 4-hydroxylase subunit alpha-3 (544 aa).

Positions 1–19 (MGPGARLAALLAVLALGTG) are cleaved as a signal peptide. The stretch at 107–131 (LEASENIRALKDGYEKVEQDLPAFE) forms a coiled coil. The stretch at 227–260 (EDALDHLAFAYFRAGNVSCALSLSREFLLYSPDN) is one TPR repeat. The N-linked (GlcNAc...) asparagine glycan is linked to N242. The Fe2OG dioxygenase domain maps to 422 to 529 (YAEYLQVVNY…KWVANKWIHE (108 aa)). Fe cation contacts are provided by H440 and D442. Residue N482 is glycosylated (N-linked (GlcNAc...) asparagine). Position 510 (H510) interacts with Fe cation. Position 520 (K520) interacts with 2-oxoglutarate.

It belongs to the P4HA family. In terms of assembly, heterotetramer of two alpha-3 chains and two beta chains (the beta chain is the multi-functional PDI). Fe(2+) serves as cofactor. Requires L-ascorbate as cofactor. N-glycosylation plays no role in the catalytic activity. As to expression, highly expressed in placenta, liver and fetal skin. Weakly expressed in fetal epiphyseal cartilage, fetal liver, fibroblast, lung and skeletal muscle. Expressed also in fibrous cap of carotid atherosclerotic lesions.

It localises to the endoplasmic reticulum lumen. The catalysed reaction is L-prolyl-[collagen] + 2-oxoglutarate + O2 = trans-4-hydroxy-L-prolyl-[collagen] + succinate + CO2. In terms of biological role, catalyzes the post-translational formation of 4-hydroxyproline in -Xaa-Pro-Gly- sequences in collagens and other proteins. This is Prolyl 4-hydroxylase subunit alpha-3 (P4HA3) from Homo sapiens (Human).